Here is a 354-residue protein sequence, read N- to C-terminus: Diaminopimelate epimerase, chloroplastic (354 aa).

The transit peptide at 1–44 (MSSATAAATATIAAAAAKLAATPAPAPSRRRLTLRGNPTARRCV) directs the protein to the chloroplast. Residues cysteine 142 and cysteine 297 contribute to the active site.

Belongs to the diaminopimelate epimerase family.

The protein localises to the plastid. It localises to the chloroplast. The enzyme catalyses (2S,6S)-2,6-diaminopimelate = meso-2,6-diaminopimelate. The protein operates within amino-acid biosynthesis; L-lysine biosynthesis via DAP pathway; DL-2,6-diaminopimelate from LL-2,6-diaminopimelate: step 1/1. This is Diaminopimelate epimerase, chloroplastic (DAPF) from Oryza sativa subsp. japonica (Rice).